The following is a 358-amino-acid chain: Methylthioribose-1-phosphate isomerase (358 aa).

Residues 54-56 (RGA), arginine 96, and glutamine 205 each bind substrate. Aspartate 246 functions as the Proton donor in the catalytic mechanism. 256-257 (NK) lines the substrate pocket.

Belongs to the eIF-2B alpha/beta/delta subunits family. MtnA subfamily.

It catalyses the reaction 5-(methylsulfanyl)-alpha-D-ribose 1-phosphate = 5-(methylsulfanyl)-D-ribulose 1-phosphate. It functions in the pathway amino-acid biosynthesis; L-methionine biosynthesis via salvage pathway; L-methionine from S-methyl-5-thio-alpha-D-ribose 1-phosphate: step 1/6. Functionally, catalyzes the interconversion of methylthioribose-1-phosphate (MTR-1-P) into methylthioribulose-1-phosphate (MTRu-1-P). This is Methylthioribose-1-phosphate isomerase from Stutzerimonas stutzeri (strain A1501) (Pseudomonas stutzeri).